Here is a 419-residue protein sequence, read N- to C-terminus: BTB/POZ domain-containing protein KCTD20 (419 aa).

Residues 117 to 191 (EKVTLLVDGT…YKTGIINCPD (75 aa)) form the BTB domain.

In terms of assembly, interacts with AKT1; AKT2 and AKT3. Interacts with PPP2CA and PPP1CA. Part of a complex containing MARK4. Ubiquitously expressed.

The protein localises to the cytoplasm. Its function is as follows. Promotes the phosphorylation of AKT family members. The protein is BTB/POZ domain-containing protein KCTD20 (Kctd20) of Mus musculus (Mouse).